The primary structure comprises 283 residues: MMRILLFLATNMAVMLVLGIILSVTGIAGNSTGGILIMALLFGFAGSLISLFLSKTMALRSVDGEVITQPRNQTERWLIDTVSRQAQKAGIPMPDVAIYHSPDVNAFATGATKSNSLVAVSTGLLNNMTEAEAEAVLAHEISHISNGDMVTMALLQGVLNTFVIFLSRVIATAVASSRNNNGEETRSSGIYFLVSMVLEMLFGVLASIIAMWFSRYREFRADAGSASLVGKEKMIMALQRLQQLHEHQNLEGSLNAFMINGKRSELFMSHPPLEKRIEALRNL.

Helical transmembrane passes span 4 to 24 and 33 to 53; these read ILLF…ILSV and GGIL…SLFL. H139 serves as a coordination point for Zn(2+). E140 is a catalytic residue. Zn(2+) is bound at residue H143. Transmembrane regions (helical) follow at residues 147-167 and 190-210; these read GDMV…IFLS and IYFL…SIIA. Zn(2+) is bound at residue E218.

This sequence belongs to the peptidase M48B family. Zn(2+) serves as cofactor.

The protein resides in the cell inner membrane. The chain is Protease HtpX from Haemophilus influenzae (strain PittEE).